The following is a 201-amino-acid chain: uncharacterized protein (201 aa).

Belongs to the phosphatidylethanolamine-binding protein family.

This is an uncharacterized protein from Saccharomyces cerevisiae (strain ATCC 204508 / S288c) (Baker's yeast).